The primary structure comprises 82 residues: Large ribosomal subunit protein bL31B (82 aa).

This sequence belongs to the bacterial ribosomal protein bL31 family. Type B subfamily. In terms of assembly, part of the 50S ribosomal subunit.

The protein is Large ribosomal subunit protein bL31B of Acinetobacter baylyi (strain ATCC 33305 / BD413 / ADP1).